A 292-amino-acid chain; its full sequence is Polyisoprenoid diphosphate/phosphate phosphohydrolase PLPP6 (292 aa).

Disordered regions lie at residues 1-34 and 66-86; these read MPSP…SGGG and GSFP…PPED. At 1–131 the chain is on the cytoplasmic side; sequence MPSPRRTIEG…SAWGSVRPLM (131 aa). The span at 10–25 shows a compositional bias: low complexity; sequence GRPLGSSGGSSVPGSP. S24 and S67 each carry phosphoserine. A compositionally biased stretch (low complexity) spans 69–79; that stretch reads PLAASGPAQAA. The helical transmembrane segment at 132 to 152 threads the bilayer; it reads KLLEISGHGIPWLLGTLYCLL. Residues 153-161 lie on the Lumenal side of the membrane; the sequence is RSDSWAGRE. Residues 162-182 traverse the membrane as a helical segment; that stretch reads VLMNLLFALLLDLLLVAVIKG. Residues 181 to 189 are phosphatase sequence motif I; sequence KGLVRRRRP. Topologically, residues 183-225 are cytoplasmic; that stretch reads LVRRRRPAHNQKDMFFTLSVDRYSFPSGHATRAALVSRFILNH. The segment at 208–211 is phosphatase sequence motif II; it reads PSGH. H211 functions as the Proton donors in the catalytic mechanism. A helical transmembrane segment spans residues 226–246; the sequence is LVLAIPLRVLVVLWAFVLGLS. A phosphatase sequence motif III region spans residues 246 to 257; it reads SRVMLGRHNVTD. The Lumenal segment spans residues 247–257; the sequence is RVMLGRHNVTD. The active-site Nucleophile is the H253. The helical transmembrane segment at 258–278 threads the bilayer; the sequence is VAFGFFLGYMQYSIVDYCWLS. The Cytoplasmic portion of the chain corresponds to 279–292; that stretch reads PHNVPVLFVLWNQQ.

It belongs to the PA-phosphatase related phosphoesterase family. Phosphorylation by PKC activates the phosphatase activity towards presqualene diphosphate.

The protein localises to the endoplasmic reticulum membrane. It localises to the nucleus envelope. It is found in the nucleus inner membrane. The enzyme catalyses presqualene diphosphate + H2O = presqualene phosphate + phosphate + H(+). It carries out the reaction presqualene phosphate + H2O = presqualene alcohol + phosphate. The catalysed reaction is (2E,6E)-farnesyl diphosphate + H2O = (2E,6E)-farnesyl phosphate + phosphate + H(+). It catalyses the reaction (2E,6E)-farnesyl phosphate + H2O = (2E,6E)-farnesol + phosphate. The enzyme catalyses (2E,6E,10E)-geranylgeranyl diphosphate + H2O = (2E,6E,10E)-geranylgeranyl phosphate + phosphate + H(+). It carries out the reaction (2E,6E,10E)-geranylgeranyl phosphate + H2O = (2E,6E,10E)-geranylgeraniol + phosphate. The catalysed reaction is (2E)-geranyl diphosphate + H2O = (2E)-geranyl phosphate + phosphate + H(+). It catalyses the reaction (2E)-geranyl phosphate + H2O = (2E)-geraniol + phosphate. The enzyme catalyses 1,2-dihexadecanoyl-sn-glycero-3-phosphate + H2O = 1,2-dihexadecanoyl-sn-glycerol + phosphate. Its function is as follows. Magnesium-independent polyisoprenoid diphosphatase that catalyzes the sequential dephosphorylation of presqualene, farnesyl, geranyl and geranylgeranyl diphosphates. Functions in the innate immune response through the dephosphorylation of presqualene diphosphate which acts as a potent inhibitor of the signaling pathways contributing to polymorphonuclear neutrophils activation. May regulate the biosynthesis of cholesterol and related sterols by dephosphorylating presqualene and farnesyl diphosphate, two key intermediates in this biosynthetic pathway. May also play a role in protein prenylation by acting on farnesyl diphosphate and its derivative geranylgeranyl diphosphate, two precursors for the addition of isoprenoid anchors to membrane proteins. Has a lower activity towards phosphatidic acid (PA), but through phosphatidic acid dephosphorylation may participate in the biosynthesis of phospholipids and triacylglycerols. May also act on ceramide-1-P, lysophosphatidic acid (LPA) and sphing-4-enine 1-phosphate/sphingosine-1-phosphate. The sequence is that of Polyisoprenoid diphosphate/phosphate phosphohydrolase PLPP6 from Mus musculus (Mouse).